A 313-amino-acid polypeptide reads, in one-letter code: Dihydroorotate dehydrogenase B (NAD(+)), catalytic subunit (313 aa).

FMN contacts are provided by residues S21 and 45-46 (KA). Substrate contacts are provided by residues K45 and 69–73 (NAIGL). 2 residues coordinate FMN: N99 and N127. N127 provides a ligand contact to substrate. C130 acts as the Nucleophile in catalysis. I191 is a binding site for FMN. Substrate is bound at residue 192 to 193 (NT). Residues G217, 243–244 (GG), and 265–266 (GT) each bind FMN.

It belongs to the dihydroorotate dehydrogenase family. Type 1 subfamily. In terms of assembly, heterotetramer of 2 PyrK and 2 PyrD type B subunits. The cofactor is FMN.

Its subcellular location is the cytoplasm. It catalyses the reaction (S)-dihydroorotate + NAD(+) = orotate + NADH + H(+). It participates in pyrimidine metabolism; UMP biosynthesis via de novo pathway; orotate from (S)-dihydroorotate (NAD(+) route): step 1/1. Its function is as follows. Catalyzes the conversion of dihydroorotate to orotate with NAD(+) as electron acceptor. This chain is Dihydroorotate dehydrogenase B (NAD(+)), catalytic subunit (pyrD), found in Bacillus caldolyticus.